We begin with the raw amino-acid sequence, 316 residues long: HPr kinase/phosphorylase (316 aa).

Active-site residues include His-141 and Lys-162. ATP is bound at residue 156-163 (GESGVGKS). Ser-163 provides a ligand contact to Mg(2+). Asp-180 (proton acceptor; for phosphorylation activity. Proton donor; for dephosphorylation activity) is an active-site residue. Positions 204–213 (MEIRGIGIID) are important for the catalytic mechanism of both phosphorylation and dephosphorylation. Glu-205 contributes to the Mg(2+) binding site. Arg-246 is an active-site residue. An important for the catalytic mechanism of dephosphorylation region spans residues 267–272 (PVKVGR).

The protein belongs to the HPrK/P family. As to quaternary structure, homohexamer. Mg(2+) is required as a cofactor.

It carries out the reaction [HPr protein]-L-serine + ATP = [HPr protein]-O-phospho-L-serine + ADP + H(+). The enzyme catalyses [HPr protein]-O-phospho-L-serine + phosphate + H(+) = [HPr protein]-L-serine + diphosphate. Functionally, catalyzes the ATP- as well as the pyrophosphate-dependent phosphorylation of a specific serine residue in HPr, a phosphocarrier protein of the phosphoenolpyruvate-dependent sugar phosphotransferase system (PTS). HprK/P also catalyzes the pyrophosphate-producing, inorganic phosphate-dependent dephosphorylation (phosphorolysis) of seryl-phosphorylated HPr (P-Ser-HPr). The two antagonistic activities of HprK/P are regulated by several intracellular metabolites, which change their concentration in response to the absence or presence of rapidly metabolisable carbon sources (glucose, fructose, etc.) in the growth medium. Therefore, by controlling the phosphorylation state of HPr, HPrK/P is a sensor enzyme that plays a major role in the regulation of carbon metabolism and sugar transport: it mediates carbon catabolite repression (CCR), and regulates PTS-catalyzed carbohydrate uptake and inducer exclusion. The sequence is that of HPr kinase/phosphorylase from Lactobacillus delbrueckii subsp. bulgaricus (strain ATCC 11842 / DSM 20081 / BCRC 10696 / JCM 1002 / NBRC 13953 / NCIMB 11778 / NCTC 12712 / WDCM 00102 / Lb 14).